The sequence spans 219 residues: Thiamine-phosphate synthase (219 aa).

Residues 44–48 (QFREK) and Asn-79 contribute to the 4-amino-2-methyl-5-(diphosphooxymethyl)pyrimidine site. 2 residues coordinate Mg(2+): Asp-80 and Asp-99. Ser-117 lines the 4-amino-2-methyl-5-(diphosphooxymethyl)pyrimidine pocket. Residue 143–145 (TST) participates in 2-[(2R,5Z)-2-carboxy-4-methylthiazol-5(2H)-ylidene]ethyl phosphate binding. Lys-146 contacts 4-amino-2-methyl-5-(diphosphooxymethyl)pyrimidine. Residues Gly-175 and 195 to 196 (IS) contribute to the 2-[(2R,5Z)-2-carboxy-4-methylthiazol-5(2H)-ylidene]ethyl phosphate site.

This sequence belongs to the thiamine-phosphate synthase family. Mg(2+) serves as cofactor.

It carries out the reaction 2-[(2R,5Z)-2-carboxy-4-methylthiazol-5(2H)-ylidene]ethyl phosphate + 4-amino-2-methyl-5-(diphosphooxymethyl)pyrimidine + 2 H(+) = thiamine phosphate + CO2 + diphosphate. The catalysed reaction is 2-(2-carboxy-4-methylthiazol-5-yl)ethyl phosphate + 4-amino-2-methyl-5-(diphosphooxymethyl)pyrimidine + 2 H(+) = thiamine phosphate + CO2 + diphosphate. It catalyses the reaction 4-methyl-5-(2-phosphooxyethyl)-thiazole + 4-amino-2-methyl-5-(diphosphooxymethyl)pyrimidine + H(+) = thiamine phosphate + diphosphate. The protein operates within cofactor biosynthesis; thiamine diphosphate biosynthesis; thiamine phosphate from 4-amino-2-methyl-5-diphosphomethylpyrimidine and 4-methyl-5-(2-phosphoethyl)-thiazole: step 1/1. Functionally, condenses 4-methyl-5-(beta-hydroxyethyl)thiazole monophosphate (THZ-P) and 2-methyl-4-amino-5-hydroxymethyl pyrimidine pyrophosphate (HMP-PP) to form thiamine monophosphate (TMP). This Bacillus thuringiensis (strain Al Hakam) protein is Thiamine-phosphate synthase.